A 413-amino-acid chain; its full sequence is Protein LAZY 1 (413 aa).

Residues 71 to 91 (FTFGGSGLLTIGTLGIAAVAV) traverse the membrane as a helical segment. Acidic residues predominate over residues 103 to 124 (DADADSDFDDNDDTAGDDEDQV). Disordered stretches follow at residues 103–127 (DADADSDFDDNDDTAGDDEDQVDSA) and 261–308 (EDGG…ASAT). 2 short sequence motifs (nuclear localization signal) span residues 275–298 (RKAGKGGGGHKTTKKRSAKDEKVP) and 338–345 (KKSRKRGS).

Belongs to the LAZY family. Expressed in the node of the stem, initiating leaf founder cells, young leaf primordia, tips of axillary meristems, spikelet pair meristems of developing tassels and ears, male flower primordia, tassels, ears, silks and seeds. Expressed in leaf sheaths, leaf pulvinus and shoot apical meristem (SAM).

Its subcellular location is the cell membrane. It is found in the nucleus. Functionally, involved in the regulation of shoot gravitropism, and tassel and ear development through the regulation of polar auxin transport (PAT) and auxin signaling. Acts as a negative regulator of basipetal PAT, but positive regulator of lateral auxin transport. Involved in the regulation of shoot gravitropism and leaf angle through the regulation of cell development. The polypeptide is Protein LAZY 1 (Zea mays (Maize)).